The chain runs to 1931 residues: Cytadherence high molecular weight protein 2 (1931 aa).

3 coiled-coil regions span residues 1626–1659 (KEHQ…LTES), 1768–1846 (FNTQ…IKTN), and 1903–1930 (HAKK…KQTS).

Component of the cytoskeleton-like structure which stabilizes the shape of the wall-less Mycoplasma. This cytoskeleton-like network of accessory proteins containing HMW proteins 1 to 5 allows the proper anchoring of cytadhesin proteins in the mycoplasmal membrane at the attachment organelle. This chain is Cytadherence high molecular weight protein 2 (hlp2), found in Mycoplasmoides gallisepticum (strain R(low / passage 15 / clone 2)) (Mycoplasma gallisepticum).